Reading from the N-terminus, the 262-residue chain is Acyl-[acyl-carrier-protein]--UDP-N-acetylglucosamine O-acyltransferase (262 aa).

The protein belongs to the transferase hexapeptide repeat family. LpxA subfamily. Homotrimer.

The protein resides in the cytoplasm. It carries out the reaction a (3R)-hydroxyacyl-[ACP] + UDP-N-acetyl-alpha-D-glucosamine = a UDP-3-O-[(3R)-3-hydroxyacyl]-N-acetyl-alpha-D-glucosamine + holo-[ACP]. The protein operates within glycolipid biosynthesis; lipid IV(A) biosynthesis; lipid IV(A) from (3R)-3-hydroxytetradecanoyl-[acyl-carrier-protein] and UDP-N-acetyl-alpha-D-glucosamine: step 1/6. Involved in the biosynthesis of lipid A, a phosphorylated glycolipid that anchors the lipopolysaccharide to the outer membrane of the cell. The sequence is that of Acyl-[acyl-carrier-protein]--UDP-N-acetylglucosamine O-acyltransferase from Vibrio vulnificus (strain CMCP6).